A 432-amino-acid polypeptide reads, in one-letter code: RNA binding protein fox-1 homolog 2 (432 aa).

The segment covering 1-21 (MAEGGQAQQQPPQLGPGAAAR) has biased composition (low complexity). Positions 1–169 (MAEGGQAQQQ…STPKRLHVSN (169 aa)) are disordered. 2 stretches are compositionally biased toward polar residues: residues 60 to 69 (QGNQEPTTTP) and 101 to 121 (YAGQ…PHGE). Over residues 122 to 159 (QSSNSPSNQNGSLTQTEGGAQTDGQQSQTQSSENSESK) the composition is skewed to low complexity. The RRM domain occupies 163–239 (KRLHVSNIPF…RKIEVNNATA (77 aa)). Residue R323 is modified to Omega-N-methylarginine. 2 positions are modified to asymmetric dimethylarginine: R339 and R371. Residues R423 and R428 each carry the asymmetric dimethylarginine; alternate modification. Omega-N-methylarginine; alternate is present on residues R423 and R428.

As to quaternary structure, interacts with ER-alpha N-terminal activation domain. Interacts with RBPMS; the interaction allows cooperative assembly of stable cell-specific alternative splicing regulatory complexes.

Its subcellular location is the nucleus. The protein localises to the cytoplasm. In terms of biological role, RNA-binding protein that regulates alternative splicing events by binding to 5'-UGCAUGU-3' elements. Prevents binding of U2AF2 to the 3'-splice site. Regulates alternative splicing of tissue-specific exons and of differentially spliced exons during erythropoiesis. Seems to act as a coregulatory factor of ER-alpha. Together with RNA binding proteins RBPMS and MBNL1/2, activates vascular smooth muscle cells alternative splicing events. In Rattus norvegicus (Rat), this protein is RNA binding protein fox-1 homolog 2 (Rbfox2).